Reading from the N-terminus, the 100-residue chain is Urease subunit gamma (100 aa).

This sequence belongs to the urease gamma subunit family. As to quaternary structure, heterotrimer of UreA (gamma), UreB (beta) and UreC (alpha) subunits. Three heterotrimers associate to form the active enzyme.

It localises to the cytoplasm. It carries out the reaction urea + 2 H2O + H(+) = hydrogencarbonate + 2 NH4(+). It functions in the pathway nitrogen metabolism; urea degradation; CO(2) and NH(3) from urea (urease route): step 1/1. In Streptomyces griseus subsp. griseus (strain JCM 4626 / CBS 651.72 / NBRC 13350 / KCC S-0626 / ISP 5235), this protein is Urease subunit gamma.